The primary structure comprises 365 residues: UDP-N-acetylglucosamine--N-acetylmuramyl-(pentapeptide) pyrophosphoryl-undecaprenol N-acetylglucosamine transferase (365 aa).

Residues threonine 17–glycine 19, asparagine 129, arginine 167, serine 194, isoleucine 250, alanine 269–glutamate 274, and glutamine 295 contribute to the UDP-N-acetyl-alpha-D-glucosamine site.

This sequence belongs to the glycosyltransferase 28 family. MurG subfamily.

The protein localises to the cell inner membrane. The enzyme catalyses di-trans,octa-cis-undecaprenyl diphospho-N-acetyl-alpha-D-muramoyl-L-alanyl-D-glutamyl-meso-2,6-diaminopimeloyl-D-alanyl-D-alanine + UDP-N-acetyl-alpha-D-glucosamine = di-trans,octa-cis-undecaprenyl diphospho-[N-acetyl-alpha-D-glucosaminyl-(1-&gt;4)]-N-acetyl-alpha-D-muramoyl-L-alanyl-D-glutamyl-meso-2,6-diaminopimeloyl-D-alanyl-D-alanine + UDP + H(+). It participates in cell wall biogenesis; peptidoglycan biosynthesis. In terms of biological role, cell wall formation. Catalyzes the transfer of a GlcNAc subunit on undecaprenyl-pyrophosphoryl-MurNAc-pentapeptide (lipid intermediate I) to form undecaprenyl-pyrophosphoryl-MurNAc-(pentapeptide)GlcNAc (lipid intermediate II). The protein is UDP-N-acetylglucosamine--N-acetylmuramyl-(pentapeptide) pyrophosphoryl-undecaprenol N-acetylglucosamine transferase of Shewanella violacea (strain JCM 10179 / CIP 106290 / LMG 19151 / DSS12).